Reading from the N-terminus, the 608-residue chain is Bifunctional dihydrofolate reductase-thymidylate synthase (608 aa).

Residues 10-228 (DIYAICACCK…TTLDFIIYKK (219 aa)) form the DHFR domain. Position 14–15 (14–15 (IC)) interacts with substrate. Ala-16 contacts NADP(+). Val-31 is a binding site for substrate. Residue 39–45 (GLGNKGV) participates in NADP(+) binding. Positions 54 and 108 each coordinate substrate. NADP(+) is bound by residues 106–108 (RTN), 128–130 (SRT), and Asn-144. Substrate is bound by residues Ile-164, Tyr-170, and Thr-185. 165–172 (GGSVVYQE) is an NADP(+) binding site. The thymidylate synthase stretch occupies residues 322–608 (YHPEYQYLNI…HEKISMDMAA (287 aa)). Arg-345 serves as a coordination point for dUMP. Cys-490 is a catalytic residue. Residues His-491, 509 to 513 (QRSCD), Asn-521, and 551 to 553 (HVY) each bind dUMP.

In the N-terminal section; belongs to the dihydrofolate reductase family. This sequence in the C-terminal section; belongs to the thymidylate synthase family. Homodimer.

The enzyme catalyses (6S)-5,6,7,8-tetrahydrofolate + NADP(+) = 7,8-dihydrofolate + NADPH + H(+). It catalyses the reaction dUMP + (6R)-5,10-methylene-5,6,7,8-tetrahydrofolate = 7,8-dihydrofolate + dTMP. Its pathway is cofactor biosynthesis; tetrahydrofolate biosynthesis; 5,6,7,8-tetrahydrofolate from 7,8-dihydrofolate: step 1/1. Functionally, bifunctional enzyme. Involved in de novo dTMP biosynthesis. Key enzyme in folate metabolism. Catalyzes an essential reaction for de novo glycine and purine synthesis, DNA precursor synthesis, and for the conversion of dUMP to dTMP. In Plasmodium falciparum (isolate K1 / Thailand), this protein is Bifunctional dihydrofolate reductase-thymidylate synthase.